Reading from the N-terminus, the 240-residue chain is UDP-2,3-diacylglucosamine hydrolase (240 aa).

Mn(2+) is bound by residues aspartate 8, histidine 10, aspartate 41, asparagine 79, and histidine 114. 79–80 (NR) provides a ligand contact to substrate. The substrate site is built by aspartate 122, serine 160, asparagine 164, lysine 167, and histidine 195. Residues histidine 195 and histidine 197 each coordinate Mn(2+).

Belongs to the LpxH family. It depends on Mn(2+) as a cofactor.

It is found in the cell inner membrane. The enzyme catalyses UDP-2-N,3-O-bis[(3R)-3-hydroxytetradecanoyl]-alpha-D-glucosamine + H2O = 2-N,3-O-bis[(3R)-3-hydroxytetradecanoyl]-alpha-D-glucosaminyl 1-phosphate + UMP + 2 H(+). It participates in glycolipid biosynthesis; lipid IV(A) biosynthesis; lipid IV(A) from (3R)-3-hydroxytetradecanoyl-[acyl-carrier-protein] and UDP-N-acetyl-alpha-D-glucosamine: step 4/6. Its function is as follows. Hydrolyzes the pyrophosphate bond of UDP-2,3-diacylglucosamine to yield 2,3-diacylglucosamine 1-phosphate (lipid X) and UMP by catalyzing the attack of water at the alpha-P atom. Involved in the biosynthesis of lipid A, a phosphorylated glycolipid that anchors the lipopolysaccharide to the outer membrane of the cell. The protein is UDP-2,3-diacylglucosamine hydrolase of Pectobacterium atrosepticum (strain SCRI 1043 / ATCC BAA-672) (Erwinia carotovora subsp. atroseptica).